The primary structure comprises 644 residues: MFQDNPLLAQLKQQLHSQTPRAEGVVKATEKGFGFLEVDAKKSYFIPPPQMKKVMHGDRIIAVIHSEKERESAEPEELVEPFLTRFVGKVQGKNDRLAIVPDHPLLKDAIPCRAARGLNHEFKEGDWAVAEMRRHPLKGDRSFYAELTQYITFGDDHFVPWWVTLARHNLEKEAPDGVATEMLDEGLVREDLTALDFVTIDSASTEDMDDALFAKALPDDKLQLIVAIADPTAWIAEGSKLDKAAKIRAFTNYLPGFNIPMLPRELSDDLCSLRANEVRPVLACRMTLSADGTIEDNIEFFAATIESKAKLVYDQVSDWLENTGDWQPESEAIAEQVRLLAQICQRRGEWRHNHALVFKDRPDYRFILGEKGEVLDIVAEPRRIANRIVEEAMIAANICAARVLRDKLGFGIYNVHMGFDPANADALAALLKTHGLHVDAEEVLTLDGFCKLRRELDAQPTGFLDSRIRRFQSFAEISTEPGPHFGLGLEAYATWTSPIRKYGDMINHRLLKAVIKGETATRPQDEITVQMAERRRLNRMAERDVGDWLYARFLKDKAGTGTRFAAEIVDISRGGMRVRLVDNGAIAFIPAPFLHAVRDELVCSQENGTVQIKGETVYKVTDVIDVTIAEVRMETRGIIARPVA.

The RNB domain maps to 189-516 (REDLTALDFV…NHRLLKAVIK (328 aa)). An S1 motif domain is found at 561–643 (GTRFAAEIVD…ETRGIIARPV (83 aa)).

The protein belongs to the RNR ribonuclease family. RNase II subfamily.

It is found in the cytoplasm. The enzyme catalyses Exonucleolytic cleavage in the 3'- to 5'-direction to yield nucleoside 5'-phosphates.. Functionally, involved in mRNA degradation. Hydrolyzes single-stranded polyribonucleotides processively in the 3' to 5' direction. This chain is Exoribonuclease 2, found in Shigella sonnei (strain Ss046).